The primary structure comprises 217 residues: MITRAELLDMLASNAPQGFEAQALGLVPIVVETSGRGERSYDIYSRLLKERLVFMVGEVNDQTANLVVAQLLFLESENPDKDISLYINSPGGSVSAGMAIYDTMQFIKPDVSTLCMGLAASMGAFLLASGAKGKRFALPNSRVMIHQPLGGARGQASDIEIQAREILYLKERLNNLLAQHTGQDVERIARDTDRDNFMSSDDAKAYGLIDQVLLKRP.

Catalysis depends on Ser121, which acts as the Nucleophile. Residue His146 is part of the active site.

Belongs to the peptidase S14 family. As to quaternary structure, fourteen ClpP subunits assemble into 2 heptameric rings which stack back to back to give a disk-like structure with a central cavity, resembling the structure of eukaryotic proteasomes.

Its subcellular location is the cytoplasm. The enzyme catalyses Hydrolysis of proteins to small peptides in the presence of ATP and magnesium. alpha-casein is the usual test substrate. In the absence of ATP, only oligopeptides shorter than five residues are hydrolyzed (such as succinyl-Leu-Tyr-|-NHMec, and Leu-Tyr-Leu-|-Tyr-Trp, in which cleavage of the -Tyr-|-Leu- and -Tyr-|-Trp bonds also occurs).. Its function is as follows. Cleaves peptides in various proteins in a process that requires ATP hydrolysis. Has a chymotrypsin-like activity. Plays a major role in the degradation of misfolded proteins. This Burkholderia vietnamiensis (strain G4 / LMG 22486) (Burkholderia cepacia (strain R1808)) protein is ATP-dependent Clp protease proteolytic subunit.